The primary structure comprises 78 residues: UPF0349 protein ABC2936 (78 aa).

This sequence belongs to the UPF0349 family.

In Shouchella clausii (strain KSM-K16) (Alkalihalobacillus clausii), this protein is UPF0349 protein ABC2936.